The following is a 130-amino-acid chain: Small ribosomal subunit protein uS8 (130 aa).

The protein belongs to the universal ribosomal protein uS8 family.

The chain is Small ribosomal subunit protein uS8 (rps22) from Agaricus bisporus (White button mushroom).